The chain runs to 240 residues: MADS-box protein SVP (240 aa).

Residues R3–F57 form the MADS-box domain. The region spanning Q87–R180 is the K-box domain. Residues V202 to G240 are disordered. Positions G206–G220 are enriched in polar residues.

In terms of assembly, forms a heterodimer with AP1 and SVP. Interacts with the SEU-LUG corepressor complex when complexed to AP1. Interacts with AGL15. Interacts with AGL16. Detected in roots and leaves. Expressed at very low levels in flowers and siliques. Present in floral meristems.

The protein localises to the nucleus. In terms of biological role, transcription repressor that inhibit floral transition in the autonomous flowering pathway, independent of photoperiod and temperature. Acts in a dosage-dependent manner. Together with AGL24 and AP1, controls the identity of the floral meristem and regulates expression of class B, C and E genes. Promotes EFM expression to suppress flowering. This chain is MADS-box protein SVP, found in Arabidopsis thaliana (Mouse-ear cress).